The sequence spans 476 residues: FAD-dependent monooxygenase dpasE (476 aa).

The N-terminal stretch at 1 to 21 (MSQPAFKIIIVGCSVTGLTLA) is a signal peptide. FAD-binding residues include Glu-35, Ala-49, and Arg-109. N-linked (GlcNAc...) asparagine glycosylation is found at Asn-190 and Asn-219. Positions 308 and 321 each coordinate FAD. Residues 441 to 461 (GAGFWITAFLSLSLLAVAATM) form a helical membrane-spanning segment.

The protein belongs to the paxM FAD-dependent monooxygenase family. FAD serves as cofactor.

The protein resides in the membrane. It participates in secondary metabolite biosynthesis; terpenoid biosynthesis. FAD-dependent monooxygenase; part of the gene cluster that mediates the biosynthesis of the diterpenoid pyrones subglutinols A and B. The first step of the pathway is the synthesis of the alpha-pyrone moiety by the polyketide synthase dpasA via condensation of one acetyl-CoA starter unit with 3 malonyl-CoA units and 2 methylations. The alpha-pyrone is then combined with geranylgeranyl pyrophosphate (GGPP) formed by the GGPP synthase dpasD through the action of the prenyltransferase dpasC to yield a linear alpha-pyrone diterpenoid. Subsequent steps in the diterpenoid pyrone biosynthetic pathway involve the decalin core formation, which is initiated by the epoxidation of the C10-C11 olefin by the FAD-dependent oxidoreductase dpasE, and is followed by a cyclization cascade catalyzed by the terpene cyclase dpasB. The FAD-linked oxidoreductase dpasF is then involved in tetrahydrofuran (THF) ring formation at the C5 unit to complete the formation of subglutinols A and B. DpasF possesses also an additional catalytic ability of multi-step oxidations to generate a new DDP analog with an enone system at the C5 named FDDP A. The chain is FAD-dependent monooxygenase dpasE from Apiospora sacchari (Arthrinium sacchari).